Here is a 285-residue protein sequence, read N- to C-terminus: MEMO1 family protein Igni_0992 (285 aa).

This sequence belongs to the MEMO1 family.

In Ignicoccus hospitalis (strain KIN4/I / DSM 18386 / JCM 14125), this protein is MEMO1 family protein Igni_0992.